The sequence spans 138 residues: MRIIENFNEFGEWGMTWRDGELVGFINGEEVVRRHLPADPLPTTLEIAADDTELRAGEKDTVRVILRALDQGGNVLSFFDDPVEVSLQGPGRIVGPSLLSFKGGAVGVYVEAGNEAGHLTLSATCRPFGTQRITFNVT.

It belongs to the glycosyl hydrolase 2 family.

It carries out the reaction Hydrolysis of terminal non-reducing beta-D-galactose residues in beta-D-galactosides.. This Rhizobium radiobacter (Agrobacterium tumefaciens) protein is Beta-galactosidase (lacZ).